The primary structure comprises 74 residues: Small ribosomal subunit protein bS18 (74 aa).

This sequence belongs to the bacterial ribosomal protein bS18 family. Part of the 30S ribosomal subunit. Forms a tight heterodimer with protein bS6.

In terms of biological role, binds as a heterodimer with protein bS6 to the central domain of the 16S rRNA, where it helps stabilize the platform of the 30S subunit. In Gloeobacter violaceus (strain ATCC 29082 / PCC 7421), this protein is Small ribosomal subunit protein bS18.